The chain runs to 443 residues: Regulator of sigma E protease (443 aa).

Position 21 (histidine 21) interacts with Zn(2+). The active site involves glutamate 22. Zn(2+) is bound at residue histidine 25. A helical transmembrane segment spans residues 98-118 (FVIIAGPLANFIFAIFAYWVI). 2 PDZ domains span residues 106–185 (ANFI…SPFN) and 198–287 (NWTF…TPVR). Transmembrane regions (helical) follow at residues 369 to 389 (LVYF…MNLF) and 423 to 443 (IGAA…FLRL).

This sequence belongs to the peptidase M50B family. Interacts with RseA. It depends on Zn(2+) as a cofactor.

Its subcellular location is the cell inner membrane. Functionally, a site-2 regulated intramembrane protease (S2P) that cleaves a peptide bond in the transmembrane region of RseA. Part of a regulated intramembrane proteolysis (RIP) cascade. Acts on DegS-cleaved RseA to release the cytoplasmic domain of RseA. This provides the cell with sigma-E (RpoE) activity through the proteolysis of RseA. The chain is Regulator of sigma E protease (rsep) from Haemophilus influenzae (strain ATCC 51907 / DSM 11121 / KW20 / Rd).